Consider the following 383-residue polypeptide: NIPA-like protein 2 (383 aa).

2 N-linked (GlcNAc...) asparagine glycosylation sites follow: asparagine 23 and asparagine 33. Helical transmembrane passes span 46-66, 88-108, 115-135, 144-164, 177-197, 208-228, 243-263, 278-298, and 306-326; these read IHLF…ISLN, VLWL…FAAY, LIAP…VLFL, LLGM…APNI, FVGW…CILL, IVVL…SVKA, LTYA…VFQV, VVPV…IIFY, and FLTV…VFLV. Residues 352-383 are disordered; that stretch reads DKVQPDSNGLSYGTLPDGGDSTRGQCGEKKES.

This sequence belongs to the NIPA family.

Its subcellular location is the membrane. The polypeptide is NIPA-like protein 2 (Nipal2) (Mus musculus (Mouse)).